The following is a 2112-amino-acid chain: Phenolphthiocerol synthesis polyketide synthase type I Pks15/1 (2112 aa).

One can recognise a Ketosynthase family 3 (KS3) domain in the interval 46–469; it reads TEPVAVVGIG…GTNAHLILEE (424 aa). Residues cysteine 216, histidine 351, and histidine 391 each act as for beta-ketoacyl synthase activity in the active site. An acyltransferase region spans residues 579-893; that stretch reads TVVVFPGQGA…GQVFTTGVPV (315 aa). The For acyltransferase activity role is filled by serine 670. The segment at 941–1063 is N-terminal hotdog fold; it reads HALLGAVVER…GMLGVAAAET (123 aa). Residues 941–1101 are dehydratase; it reads HALLGAVVER…YAYGPAFQGL (161 aa). The 275-residue stretch at 941–1215 folds into the PKS/mFAS DH domain; the sequence is HALLGAVVER…TRPITAEQLR (275 aa). Residue histidine 973 is the Proton acceptor; for dehydratase activity of the active site. Residues 1075-1215 form a C-terminal hotdog fold region; sequence AESVDISDGY…TRPITAEQLR (141 aa). The active-site Proton donor; for dehydratase activity is aspartate 1136. Residues 1406–1711 are enoylreductase; that stretch reads GTLEDLVIQP…QARHIGKVVL (306 aa). NADP(+) is bound by residues 1536–1553 and 1725–1740; these read VLIH…VQLA and TVVI…GVLA. Positions 1724–1905 are beta-ketoacyl reductase; the sequence is GTVVITGATG…SLAWGLWEQP (182 aa). One can recognise a Carrier domain in the interval 2010-2085; that stretch reads ELLVGLVCLQ…AVAEYVAQQM (76 aa). Residue serine 2045 is modified to O-(pantetheine 4'-phosphoryl)serine. The segment covering 2084-2100 has biased composition (polar residues); that stretch reads QMSGSRPTESGDPTSQV. Residues 2084–2112 are disordered; that stretch reads QMSGSRPTESGDPTSQVVEPAAAEVSVHA.

This sequence belongs to the thiolase-like superfamily. Beta-ketoacyl-ACP synthases family. Pantetheine 4'-phosphate serves as cofactor.

The enzyme catalyses a fatty acyl-[ACP] + malonyl-[ACP] + H(+) = a 3-oxoacyl-[ACP] + holo-[ACP] + CO2. It functions in the pathway lipid metabolism; fatty acid biosynthesis. Catalyzes the elongation by iterative transfer of p-hydroxybenzoyl group from FadD22 (pHBA-S-FAdD22) to form p-hydroxyphenylalkanoate (pHPA) intermediates during phenolphthiocerol (PPOL) biosynthesis. PPOL is an important intermediate in the biosynthesis of phenolic glycolipid (mycosid B). This chain is Phenolphthiocerol synthesis polyketide synthase type I Pks15/1 (pks15/1), found in Mycobacterium bovis (strain ATCC BAA-935 / AF2122/97).